The primary structure comprises 284 residues: Bifunctional protein FolD (284 aa).

Residues 164 to 166 and serine 189 contribute to the NADP(+) site; that span reads GRS.

Belongs to the tetrahydrofolate dehydrogenase/cyclohydrolase family. In terms of assembly, homodimer.

The catalysed reaction is (6R)-5,10-methylene-5,6,7,8-tetrahydrofolate + NADP(+) = (6R)-5,10-methenyltetrahydrofolate + NADPH. The enzyme catalyses (6R)-5,10-methenyltetrahydrofolate + H2O = (6R)-10-formyltetrahydrofolate + H(+). The protein operates within one-carbon metabolism; tetrahydrofolate interconversion. In terms of biological role, catalyzes the oxidation of 5,10-methylenetetrahydrofolate to 5,10-methenyltetrahydrofolate and then the hydrolysis of 5,10-methenyltetrahydrofolate to 10-formyltetrahydrofolate. The protein is Bifunctional protein FolD of Listeria innocua serovar 6a (strain ATCC BAA-680 / CLIP 11262).